The following is a 162-amino-acid chain: Cytochrome c-type biogenesis protein CcmE (162 aa).

Residues 1–7 (MTRKQRR) are Cytoplasmic-facing. Residues 8–28 (LTMIGGSLVVLAIAAALVLNA) form a helical; Signal-anchor for type II membrane protein membrane-spanning segment. Residues 29–162 (LRDSIVFFST…EASGKQGVSQ (134 aa)) are Periplasmic-facing. Heme is bound by residues His122 and Tyr126. The interval 138–162 (QGHWKDDYGPQAGAVEASGKQGVSQ) is disordered.

The protein belongs to the CcmE/CycJ family.

The protein resides in the cell inner membrane. In terms of biological role, heme chaperone required for the biogenesis of c-type cytochromes. Transiently binds heme delivered by CcmC and transfers the heme to apo-cytochromes in a process facilitated by CcmF and CcmH. The protein is Cytochrome c-type biogenesis protein CcmE of Nitrobacter hamburgensis (strain DSM 10229 / NCIMB 13809 / X14).